The following is a 186-amino-acid chain: Ribosome-recycling factor (186 aa).

Belongs to the RRF family.

The protein localises to the cytoplasm. In terms of biological role, responsible for the release of ribosomes from messenger RNA at the termination of protein biosynthesis. May increase the efficiency of translation by recycling ribosomes from one round of translation to another. The chain is Ribosome-recycling factor from Rickettsia prowazekii (strain Madrid E).